The primary structure comprises 160 residues: GPI-anchored protein LLG3 (160 aa).

The first 23 residues, 1 to 23 (MKITHHCLVSLLSILLLSGFAFS), serve as a signal peptide directing secretion. The N-linked (GlcNAc...) asparagine glycan is linked to asparagine 56. Serine 137 is lipidated: GPI-anchor amidated serine. The propeptide at 138–160 (HASIPLVSTHVLLITVSILFHLF) is removed in mature form.

Expressed in pollen, pollen tubes, sporophytic pistil tissues, in the early stages of female gametophyte development, and in unfertilized, mature ovules.

It localises to the cell membrane. This chain is GPI-anchored protein LLG3, found in Arabidopsis thaliana (Mouse-ear cress).